Reading from the N-terminus, the 1205-residue chain is Chromosome partition protein Smc (1205 aa).

Residue 32–39 (PNGSGKSN) coordinates ATP. Coiled-coil stretches lie at residues 169 to 288 (KHRK…SIQH) and 330 to 499 (EELE…GLQR). The SMC hinge domain occupies 514 to 628 (GLFGSIAQLV…VNDLTEAMGL (115 aa)). Coiled-coil stretches lie at residues 661 to 771 (LEVT…AQET), 802 to 836 (AVRT…RAQQ), and 979 to 1033 (DRVT…KDLL).

It belongs to the SMC family. As to quaternary structure, homodimer.

It localises to the cytoplasm. In terms of biological role, required for chromosome condensation and partitioning. The protein is Chromosome partition protein Smc of Mycobacterium tuberculosis (strain ATCC 25618 / H37Rv).